A 331-amino-acid polypeptide reads, in one-letter code: DNA-directed RNA polymerase subunit alpha (331 aa).

The alpha N-terminal domain (alpha-NTD) stretch occupies residues 1-233; that stretch reads MVREEIAVST…DLFLPFLHAE (233 aa). Residues 268–331 are alpha C-terminal domain (alpha-CTD); the sequence is ALKRVFIDQS…GILQKRFAID (64 aa).

Belongs to the RNA polymerase alpha chain family. In terms of assembly, in plastids the minimal PEP RNA polymerase catalytic core is composed of four subunits: alpha, beta, beta', and beta''. When a (nuclear-encoded) sigma factor is associated with the core the holoenzyme is formed, which can initiate transcription.

The protein resides in the plastid. Its subcellular location is the chloroplast. It catalyses the reaction RNA(n) + a ribonucleoside 5'-triphosphate = RNA(n+1) + diphosphate. In terms of biological role, DNA-dependent RNA polymerase catalyzes the transcription of DNA into RNA using the four ribonucleoside triphosphates as substrates. This is DNA-directed RNA polymerase subunit alpha from Illicium oligandrum (Star anise).